We begin with the raw amino-acid sequence, 169 residues long: Peptide methionine sulfoxide reductase MsrA (169 aa).

Cysteine 13 is a catalytic residue.

It belongs to the MsrA Met sulfoxide reductase family.

It catalyses the reaction L-methionyl-[protein] + [thioredoxin]-disulfide + H2O = L-methionyl-(S)-S-oxide-[protein] + [thioredoxin]-dithiol. The catalysed reaction is [thioredoxin]-disulfide + L-methionine + H2O = L-methionine (S)-S-oxide + [thioredoxin]-dithiol. Has an important function as a repair enzyme for proteins that have been inactivated by oxidation. Catalyzes the reversible oxidation-reduction of methionine sulfoxide in proteins to methionine. This chain is Peptide methionine sulfoxide reductase MsrA, found in Mycolicibacterium gilvum (strain PYR-GCK) (Mycobacterium gilvum (strain PYR-GCK)).